The sequence spans 516 residues: Katanin p60 ATPase-containing subunit A1 (516 aa).

Residues 75 to 212 (GFKSEPAAPE…DEKKFDPAGY (138 aa)) form a disordered region. Composition is skewed to basic and acidic residues over residues 133 to 143 (ARKDPPRRSEP) and 155 to 167 (RGGRGPSDRRGDA). Residues 168–178 (RSGGGGRGGAR) are compositionally biased toward gly residues. Residues 179 to 212 (GSDKDKNRGGKSDKDKKAPSGEEGDEKKFDPAGY) are compositionally biased toward basic and acidic residues. 274–281 (GPPGTGKT) serves as a coordination point for ATP.

The protein belongs to the AAA ATPase family. Katanin p60 subunit A1 subfamily. Can homooligomerize into hexameric rings, which may be promoted by interaction with microtubules. Interacts with KATNB1, which may serve as a targeting subunit.

The protein resides in the cytoplasm. It is found in the cytoskeleton. It localises to the microtubule organizing center. Its subcellular location is the centrosome. The protein localises to the spindle pole. The catalysed reaction is n ATP + n H2O + a microtubule = n ADP + n phosphate + (n+1) alpha/beta tubulin heterodimers.. ATPase activity is stimulated by microtubules, which promote homooligomerization. ATP-dependent microtubule severing is stimulated by interaction with KATNB1. Catalytic subunit of a complex which severs microtubules in an ATP-dependent manner. Microtubule severing may promote rapid reorganization of cellular microtubule arrays and the release of microtubules from the centrosome following nucleation. In mitotic spindles this could allow depolymerization of the microtubule end proximal to the centrosome, and subsequent poleward microtubule flux. The sequence is that of Katanin p60 ATPase-containing subunit A1 from Strongylocentrotus purpuratus (Purple sea urchin).